We begin with the raw amino-acid sequence, 354 residues long: Divinyl chlorophyll a/b light-harvesting protein PcbG (354 aa).

A run of 6 helical transmembrane segments spans residues 27–47 (FIAAHAGHTGLISFAAGASTL), 65–85 (IFLAHLASIGIGFDDAGVWTG), 88–108 (VASVAIVHIIASLVYAGGALS), 201–221 (VLGGHAFLAFVEITGGAFHIA), 241–261 (AVLSFSLAGIGWMAIVAAFWC), and 308–328 (LTNVHYYFGFFFLQGHLWHAI).

The protein belongs to the PsbB/PsbC family. IsiA/Pcb subfamily. The antenna complex consists of divinyl chlorophylls (a and b) and divinyl chlorophyll a/b binding proteins and binds more divinyl chlorophyll b than does the antenna complex from high-light-adapted Prochlorococcus. Divinyl chlorophyll a serves as cofactor. Requires divinyl chlorophyll b as cofactor.

The protein localises to the cellular thylakoid membrane. The antenna complex functions as a light receptor, it captures and delivers excitation energy to photosystems II and I. The Prochlorales pcb genes are not related to higher plant LHCs. This Prochlorococcus marinus (strain NATL2A) protein is Divinyl chlorophyll a/b light-harvesting protein PcbG (pcbG).